A 335-amino-acid polypeptide reads, in one-letter code: Beta-hexosaminidase (335 aa).

Substrate contacts are provided by residues Asp-60, Arg-68, Arg-133, and 163-164 (KH). Residue His-176 is the Proton donor/acceptor of the active site. Catalysis depends on Asp-247, which acts as the Nucleophile.

The protein belongs to the glycosyl hydrolase 3 family. NagZ subfamily. In terms of assembly, monomer.

Its subcellular location is the cytoplasm. The catalysed reaction is Hydrolysis of terminal non-reducing N-acetyl-D-hexosamine residues in N-acetyl-beta-D-hexosaminides.. It participates in cell wall biogenesis; peptidoglycan recycling. In terms of biological role, plays a role in peptidoglycan recycling by cleaving the terminal beta-1,4-linked N-acetylglucosamine (GlcNAc) from peptide-linked peptidoglycan fragments, giving rise to free GlcNAc, anhydro-N-acetylmuramic acid and anhydro-N-acetylmuramic acid-linked peptides. The polypeptide is Beta-hexosaminidase (Xylella fastidiosa (strain 9a5c)).